The sequence spans 407 residues: ETS domain-containing protein Elk-3 (407 aa).

A DNA-binding region (ETS) is located at residues isoleucine 5 to valine 85. Lysine 92 is covalently cross-linked (Glycyl lysine isopeptide (Lys-Gly) (interchain with G-Cter in SUMO2)). Residue serine 115 is modified to Phosphoserine. Residue lysine 165 forms a Glycyl lysine isopeptide (Lys-Gly) (interchain with G-Cter in SUMO2) linkage. Disordered regions lie at residues serine 234 to proline 253 and leucine 271 to glutamate 298. The CTBP-binding motif signature appears at proline 273–serine 277. A Phosphoserine modification is found at serine 396.

Belongs to the ETS family. As to quaternary structure, interacts with CTBP1.

The protein resides in the nucleus. In terms of biological role, may be a negative regulator of transcription, but can activate transcription when coexpressed with Ras, Src or Mos. Forms a ternary complex with the serum response factor and the ETS and SRF motifs of the Fos serum response element. The chain is ETS domain-containing protein Elk-3 (ELK3) from Homo sapiens (Human).